The following is a 170-amino-acid chain: CASP-like protein 1F1 (170 aa).

Residues 1–16 (MMGDNEGRRTPLLNLG) lie on the Cytoplasmic side of the membrane. A helical membrane pass occupies residues 17 to 37 (VQVSMRVLIIGAAMASMWVMI). Residues 38–62 (TNREVASVYGIAFEAKYSYSSAFRY) lie on the Extracellular side of the membrane. The helical transmembrane segment at 63 to 83 (LVYAQIAVCAATLFTLVWACL) threads the bilayer. The Cytoplasmic portion of the chain corresponds to 84 to 88 (AVRRR). The chain crosses the membrane as a helical span at residues 89–109 (GLVFALFFFDLLTTLTAISAF). Residues 110–141 (SAAFAEGYVGKYGNKQAGWLPICGYVHVYCSR) lie on the Extracellular side of the membrane. The chain crosses the membrane as a helical span at residues 142-162 (VTISLAMSFASFVLLFILTVL). Over 163–170 (TASSARHY) the chain is Cytoplasmic.

The protein belongs to the Casparian strip membrane proteins (CASP) family. In terms of assembly, homodimer and heterodimers.

The protein resides in the cell membrane. This is CASP-like protein 1F1 from Arabidopsis lyrata subsp. lyrata (Lyre-leaved rock-cress).